We begin with the raw amino-acid sequence, 159 residues long: 3-hydroxyacyl-[acyl-carrier-protein] dehydratase FabZ (159 aa).

Histidine 58 is an active-site residue.

This sequence belongs to the thioester dehydratase family. FabZ subfamily.

Its subcellular location is the cytoplasm. It catalyses the reaction a (3R)-hydroxyacyl-[ACP] = a (2E)-enoyl-[ACP] + H2O. Involved in unsaturated fatty acids biosynthesis. Catalyzes the dehydration of short chain beta-hydroxyacyl-ACPs and long chain saturated and unsaturated beta-hydroxyacyl-ACPs. The polypeptide is 3-hydroxyacyl-[acyl-carrier-protein] dehydratase FabZ (Helicobacter pylori (strain HPAG1)).